The sequence spans 479 residues: Long-chain acyl-protein thioester reductase (479 aa).

The protein belongs to the LuxC family.

The catalysed reaction is a long-chain fatty aldehyde + NADP(+) + CoA = a long-chain fatty acyl-CoA + NADPH + H(+). The protein operates within lipid metabolism; fatty acid reduction for biolumincescence. Its function is as follows. LuxC is the fatty acid reductase enzyme responsible for synthesis of the aldehyde substrate for the luminescent reaction catalyzed by luciferase. This Aliivibrio fischeri (Vibrio fischeri) protein is Long-chain acyl-protein thioester reductase (luxC).